The sequence spans 495 residues: Glycerol kinase (495 aa).

An ADP-binding site is contributed by threonine 12. The ATP site is built by threonine 12, threonine 13, and serine 14. Threonine 12 is a sn-glycerol 3-phosphate binding site. Arginine 16 is a binding site for ADP. Positions 82, 83, 134, and 243 each coordinate sn-glycerol 3-phosphate. The glycerol site is built by arginine 82, glutamate 83, tyrosine 134, aspartate 243, and glutamine 244. ADP is bound by residues threonine 265 and glycine 308. The ATP site is built by threonine 265, glycine 308, glutamine 312, and glycine 409. ADP is bound by residues glycine 409 and asparagine 413.

This sequence belongs to the FGGY kinase family.

The enzyme catalyses glycerol + ATP = sn-glycerol 3-phosphate + ADP + H(+). The protein operates within polyol metabolism; glycerol degradation via glycerol kinase pathway; sn-glycerol 3-phosphate from glycerol: step 1/1. Its activity is regulated as follows. Inhibited by fructose 1,6-bisphosphate (FBP). In terms of biological role, key enzyme in the regulation of glycerol uptake and metabolism. Catalyzes the phosphorylation of glycerol to yield sn-glycerol 3-phosphate. The polypeptide is Glycerol kinase (Ectopseudomonas mendocina (strain ymp) (Pseudomonas mendocina)).